The following is a 181-amino-acid chain: Cytolethal distending toxin subunit C (181 aa).

A signal peptide spans 1-15; that stretch reads MKKLAIVFTMLLIAG. Residue cysteine 16 is the site of N-palmitoyl cysteine attachment. Cysteine 16 carries S-diacylglycerol cysteine lipidation. In terms of domain architecture, Ricin B-type lectin spans 79–181; the sequence is QSGWIMIRTP…NPLNTESPII (103 aa).

In terms of assembly, heterotrimer of 3 subunits, CdtA, CdtB and CdtC.

The protein localises to the cell outer membrane. Its function is as follows. Part of the tripartite complex that is required for the CDT activity. CdtC, along with CdtA, probably forms a heterodimeric subunit required for the delivery of CdtB. The sequence is that of Cytolethal distending toxin subunit C (cdtC) from Escherichia coli.